Reading from the N-terminus, the 650-residue chain is Epithelial sodium channel subunit gamma (650 aa).

The Cytoplasmic portion of the chain corresponds to 1–55 (MAPGEKIKAKIKKNLPVRGPQAPTIKDLMHWYCMNTNTHGCRRIVVSRGRLRRLL). The helical transmembrane segment at 56-76 (WIAFTLTAVALIIWQCALLVF) threads the bilayer. Topologically, residues 77-542 (SFYTVSVSIK…GGQLGLWMSC (466 aa)) are extracellular. Intrachain disulfides connect cysteine 100/cysteine 284, cysteine 208/cysteine 215, cysteine 261/cysteine 268, cysteine 373/cysteine 458, cysteine 395/cysteine 454, cysteine 399/cysteine 450, cysteine 408/cysteine 435, and cysteine 410/cysteine 424. The gating release of inhibition by proteolysis (GRIP); protease-sensitive region that is responsible for the proteolytic activation of the channel stretch occupies residues 135-222 (RKRREAGSMP…SDCATYTFSS (88 aa)). A glycan (N-linked (GlcNAc...) asparagine) is linked at asparagine 210. Asparagine 272 is a glycosylation site (N-linked (GlcNAc...) asparagine). N-linked (GlcNAc...) asparagine glycosylation occurs at asparagine 498. Residues 543–563 (SVVCVIEIIEVFFIDFFSIIA) traverse the membrane as a helical segment. Residues 564–650 (RRQWHKAKDW…LTDTQLTNEL (87 aa)) lie on the Cytoplasmic side of the membrane. A disordered region spans residues 577-628 (RQTPPSTETPSSRQGQDNPALDTDDDLPTFTSAMRLPPAPGSTVPGTPPPRY). Residues 579–593 (TPPSTETPSSRQGQD) show a composition bias toward polar residues. The PY motif; mediates interaction, ubiquitination and inhibition by NEDD4 and NEDD4L signature appears at 624–628 (PPPRY). The PY motif; recruits WW domain-containing proteins and is thereby required for ubiquitination and inhibition of the channel by NEDD4 and NEDD4L motif lies at 624–628 (PPPRY).

Belongs to the amiloride-sensitive sodium channel (TC 1.A.6) family. SCNN1G subfamily. Component of the heterotrimeric epithelial sodium channel (ENaC) composed of an alpha/SCNN1A, a beta/SCNN1B and a gamma/SCNN1G subunit. Interacts with WWP1 (via WW domains). Interacts with WWP2 (via WW domains); inhibits the channel. Interacts with the full-length immature form of PCSK9 (pro-PCSK9); inhibits ENaC by promoting its proteasomal degradation. Interacts with BPIFA1; the interaction is indirect via SCNN1B and inhibits the proteolytic maturation of SCNN1A and SCNN1G and the activation of ENaC. Phosphorylated on serine and threonine residues. Aldosterone and insulin increase the basal level of phosphorylation. Post-translationally, ubiquitinated. Can be ubiquitinated at multiple sites and undergo monoubiquitination and polyubiquitination. Ubiquitination by NEDD4 or NEDD4L inhibits the ENaC channel through endocytosis, intracellular retention and degradation of its individual subunits. In terms of processing, ENaC is activated through the proteolytic maturation of its subunits. Furin cleaves the SCNN1G subunit first, followed by cleavage by prostasin (PRSS8), which results in a stepwise increase in the open probability of the channel due to the release of an inhibitory tract. BPIFA1, which is recruited by the SCNN1B subunit, prevents the proteolytic activation of ENaC. N-glycosylated. N-linked glycans are processed to complex type during ENaC complex assembly and transport to the plasma membrane.

It is found in the apical cell membrane. It carries out the reaction Na(+)(in) = Na(+)(out). With respect to regulation, originally identified and characterized by its inhibition by the diuretic drug amiloride. In terms of biological role, this is one of the three pore-forming subunits of the heterotrimeric epithelial sodium channel (ENaC), a critical regulator of sodium balance and fluid homeostasis. ENaC operates in epithelial tissues, where it mediates the electrodiffusion of sodium ions from extracellular fluid through the apical membrane of cells, with water following osmotically. It plays a key role in maintaining sodium homeostasis through electrogenic sodium reabsorption in the kidneys. Additionally, ENaC is essential for airway surface liquid homeostasis, which is crucial for proper mucus clearance. This chain is Epithelial sodium channel subunit gamma, found in Rattus norvegicus (Rat).